The primary structure comprises 403 residues: Glucose-signaling factor 2 (403 aa).

Topologically, residues 1-177 are lumenal; the sequence is MEIYIRLNAD…QEVQANYSSL (177 aa). Residues N89 and N173 are each glycosylated (N-linked (GlcNAc...) asparagine). The chain crosses the membrane as a helical; Signal-anchor for type II membrane protein span at residues 178-198; the sequence is VAQWLFFVMHIFKVGIITLFL. Residues 199–403 lie on the Cytoplasmic side of the membrane; that stretch reads KLGIANPISF…IKKNDLKKSN (205 aa). Residues 330 to 388 adopt a coiled-coil conformation; the sequence is ELENNLKKILEEYDGDIGKMNAEIRRFRRFGIYEPDEKLASLVKLRREIADEKEKASNN.

It is found in the endoplasmic reticulum membrane. In terms of biological role, may be involved in the secretion of hexose transporters from the endoplasmic reticulum. Involved in secretion of GAL2 and HXT1. In Saccharomyces cerevisiae (strain ATCC 204508 / S288c) (Baker's yeast), this protein is Glucose-signaling factor 2 (GSF2).